Here is a 37-residue protein sequence, read N- to C-terminus: Large ribosomal subunit protein bL36c (37 aa).

The protein belongs to the bacterial ribosomal protein bL36 family.

It localises to the plastid. The protein resides in the chloroplast. This is Large ribosomal subunit protein bL36c from Lactuca sativa (Garden lettuce).